The chain runs to 95 residues: Small ribosomal subunit protein bS18 (95 aa).

The protein belongs to the bacterial ribosomal protein bS18 family. In terms of assembly, part of the 30S ribosomal subunit. Forms a tight heterodimer with protein bS6.

Binds as a heterodimer with protein bS6 to the central domain of the 16S rRNA, where it helps stabilize the platform of the 30S subunit. In Rickettsia massiliae (strain Mtu5), this protein is Small ribosomal subunit protein bS18.